Reading from the N-terminus, the 302-residue chain is Stanniocalcin-2 (302 aa).

An N-terminal signal peptide occupies residues 1 to 24 (MCAERLGHFMTLALVLATIDPARG). The disordered stretch occupies residues 23–44 (RGTDATNPPEGPQDRSSQQKGR). The N-linked (GlcNAc...) asparagine glycan is linked to asparagine 73. Positions 218 to 302 (PPTAPPERQP…EQSEYSDIRR (85 aa)) are disordered. Residues 227 to 264 (PQVDRAKLSRAHHGEAGHHLPEPSSRETGRGAKGERGS) show a composition bias toward basic and acidic residues. 2 positions are modified to phosphoserine: serine 250 and serine 251. Phosphothreonine is present on threonine 254.

It belongs to the stanniocalcin family. In terms of assembly, homodimer; disulfide-linked.

Its subcellular location is the secreted. Functionally, has an anti-hypocalcemic action on calcium and phosphate homeostasis. This is Stanniocalcin-2 (STC2) from Macaca nemestrina (Pig-tailed macaque).